Consider the following 306-residue polypeptide: Ubiquitin-conjugating enzyme E2Q-like protein CG4502 (306 aa).

The tract at residues 18-77 (HKSSNNNNNNNNNHNNNINNNNNNDKVDGATGSSPNINNNNNNNNNNNNHDGAAAPSSAG) is disordered. 2 stretches are compositionally biased toward low complexity: residues 22 to 41 (NNNN…NNNN) and 53 to 77 (NINN…SSAG). A UBC core domain is found at 138–299 (IRTRRLMKEY…VKTHEKYGWV (162 aa)). The active-site Glycyl thioester intermediate is the C234.

This sequence belongs to the ubiquitin-conjugating enzyme family.

It catalyses the reaction S-ubiquitinyl-[E1 ubiquitin-activating enzyme]-L-cysteine + [E2 ubiquitin-conjugating enzyme]-L-cysteine = [E1 ubiquitin-activating enzyme]-L-cysteine + S-ubiquitinyl-[E2 ubiquitin-conjugating enzyme]-L-cysteine.. It participates in protein modification; protein ubiquitination. Functionally, catalyzes the covalent attachment of ubiquitin to other proteins. The protein is Ubiquitin-conjugating enzyme E2Q-like protein CG4502 of Drosophila melanogaster (Fruit fly).